The following is a 113-amino-acid chain: Large ribosomal subunit protein bL17 (113 aa).

It belongs to the bacterial ribosomal protein bL17 family. In terms of assembly, part of the 50S ribosomal subunit. Contacts protein L32.

The protein is Large ribosomal subunit protein bL17 of Clostridium perfringens (strain ATCC 13124 / DSM 756 / JCM 1290 / NCIMB 6125 / NCTC 8237 / Type A).